Reading from the N-terminus, the 217-residue chain is GRB2-related adapter protein (217 aa).

An SH3 1 domain is found at 1-58; sequence MESVALYSFQATESDELAFNKGDTLKILNMEDDQNWYKAELRGAEGFVPKNYIRLKPH. Positions 60–152 constitute an SH2 domain; it reads WYSGRISRQL…KRQVFLQDEE (93 aa). The 60-residue stretch at 158 to 217 folds into the SH3 2 domain; sequence PRACFAQAQFDFSAQDPSQLSFRRGDIIEVLERLDPSWWRGRLSGRIGFFPRSYVQPVHM.

The protein belongs to the GRB2/sem-5/DRK family. Associates through its SH2 domain with ligand-activated receptors for stem cell factor (KIT) and erythropoietin (EPOR). Also forms a stable complex with the Bcr-Abl oncoprotein. GRAP is associated with the Ras guanine nucleotide exchange factor SOS1, primarily through its N-terminal SH3 domain. Interacts with phosphorylated LAT upon TCR activation. Interacts with SHB.

The protein resides in the membrane. The protein localises to the synapse. Its function is as follows. Couples signals from receptor and cytoplasmic tyrosine kinases to the Ras signaling pathway. Plays a role in the inner ear and in hearing. This Bos taurus (Bovine) protein is GRB2-related adapter protein (GRAP).